The chain runs to 890 residues: Translation initiation factor IF-2 (890 aa).

The disordered stretch occupies residues 45–304 (LIDHLNQKNS…LQQGFQKPAQ (260 aa)). A compositionally biased stretch (polar residues) spans 67 to 81 (STLNIPGTGGKSKSV). Residues 92–217 (VKRDPQEAER…RMAEENKWTD (126 aa)) show a composition bias toward basic and acidic residues. The span at 252–266 (GRGRNAKAARPKKGN) shows a compositional bias: basic residues. Over residues 267 to 280 (KHAESKADREEARA) the composition is skewed to basic and acidic residues. Residues 389–558 (PRAPVVTIMG…LLQAEVLELK (170 aa)) form the tr-type G domain. A G1 region spans residues 398–405 (GHVDHGKT). Position 398–405 (398–405 (GHVDHGKT)) interacts with GTP. The segment at 423–427 (GITQH) is G2. The interval 444 to 447 (DTPG) is G3. GTP is bound by residues 444–448 (DTPGH) and 498–501 (NKID). A G4 region spans residues 498–501 (NKID). Residues 534-536 (SAK) are G5. At Lys-808 the chain carries N6-acetyllysine.

It belongs to the TRAFAC class translation factor GTPase superfamily. Classic translation factor GTPase family. IF-2 subfamily.

It is found in the cytoplasm. In terms of biological role, one of the essential components for the initiation of protein synthesis. Protects formylmethionyl-tRNA from spontaneous hydrolysis and promotes its binding to the 30S ribosomal subunits. Also involved in the hydrolysis of GTP during the formation of the 70S ribosomal complex. The polypeptide is Translation initiation factor IF-2 (Shigella sonnei (strain Ss046)).